The chain runs to 323 residues: Aldo-keto reductase family 1 member C21 (323 aa).

Position 20–24 (20–24 (GFGTA)) interacts with NADP(+). Lys-31 is a binding site for substrate. Asp-50 provides a ligand contact to NADP(+). The Proton donor role is filled by Tyr-55. His-117 contacts substrate. Residues 166-167 (SN), Gln-190, 216-224 (YGVLGTQRY), and 270-280 (TSLKEERIKEN) contribute to the NADP(+) site.

The protein belongs to the aldo/keto reductase family. Monomer. In terms of tissue distribution, detected in kidney and brain.

Its subcellular location is the cytoplasm. The catalysed reaction is androsterone + NADP(+) = 5alpha-androstan-3,17-dione + NADPH + H(+). The enzyme catalyses androsterone + NAD(+) = 5alpha-androstan-3,17-dione + NADH + H(+). With respect to regulation, inhibited by high concentrations of substrate. Its function is as follows. NADP-dependent 17-alpha-hydroxysteroid dehydrogenase that converts 5-alpha-androstane-3,17-dione into androsterone. Has lower 3-alpha-hydroxysteroid dehydrogenase activity. Has broad substrate specificity and acts on various 17-alpha-hydroxysteroids, 17-ketosteroids, 3-alpha hydroxysteroids and 3-ketosteroids. Reduction of keto groups is strictly stereoselective. Reduction of 17-ketosteroids yields only 17-alpha-hydroxysteroids. Likewise, reduction of 3-ketosteroids yields only 3-alpha-hydroxysteroids. In Mus musculus (Mouse), this protein is Aldo-keto reductase family 1 member C21 (Akr1c21).